A 38-amino-acid chain; its full sequence is Toxin Lqh 8/6 (38 aa).

Intrachain disulfides connect cysteine 2-cysteine 19, cysteine 5-cysteine 28, cysteine 16-cysteine 33, and cysteine 20-cysteine 35.

As to expression, expressed by the venom gland.

It is found in the secreted. Functionally, toxin with unknown function in healthy organisms. On glioma cells, interacts with chloride channels (probably ClC-3/CLCN3) and MMP2 at the surface of glioma cells. This complex is then internalized via caveolae, thus inhibiting the chloride channels necessary for cell shrinkage and tumor propagation. This is Toxin Lqh 8/6 from Leiurus hebraeus (Hebrew deathstalker scorpion).